The sequence spans 632 residues: Phosphatidylinositol-3,5-bisphosphate 3-phosphatase MTMR8 (632 aa).

Residues 126–500 form the Myotubularin phosphatase domain; that stretch reads GWELISVVND…LHFKFWCGMY (375 aa). Residues asparagine 250, asparagine 275, and isoleucine 276 each coordinate a 1,2-diacyl-sn-glycero-3-phospho-(1D-myo-inositol-3,5-bisphosphate). The a 1,2-diacyl-sn-glycero-3-phospho-(1D-myo-inositol-3-phosphate) site is built by asparagine 250, asparagine 275, and isoleucine 276. The Phosphocysteine intermediate role is filled by cysteine 338. Serine 339, aspartate 340, glycine 341, tryptophan 342, aspartate 343, arginine 344, lysine 380, and arginine 384 together coordinate a 1,2-diacyl-sn-glycero-3-phospho-(1D-myo-inositol-3,5-bisphosphate). Positions 339, 340, 341, 342, 343, and 344 each coordinate a 1,2-diacyl-sn-glycero-3-phospho-(1D-myo-inositol-3-phosphate). Positions 339 and 340 each coordinate phosphate. Phosphate-binding residues include tryptophan 342, aspartate 343, and arginine 344. Position 384 (arginine 384) interacts with a 1,2-diacyl-sn-glycero-3-phospho-(1D-myo-inositol-3-phosphate). Residues 545-632 form a disordered region; it reads LPDPAGPINT…HSKEEVQESS (88 aa). Over residues 602–632 the composition is skewed to basic and acidic residues; the sequence is EPAANEHDLSSKDKPVFVETEHSKEEVQESS.

The protein belongs to the protein-tyrosine phosphatase family. Non-receptor class myotubularin subfamily. In terms of assembly, homodimer.

It is found in the nucleus envelope. It catalyses the reaction a 1,2-diacyl-sn-glycero-3-phospho-(1D-myo-inositol-3,5-bisphosphate) + H2O = a 1,2-diacyl-sn-glycero-3-phospho-(1D-myo-inositol-5-phosphate) + phosphate. The enzyme catalyses a 1,2-diacyl-sn-glycero-3-phospho-(1D-myo-inositol-3-phosphate) + H2O = a 1,2-diacyl-sn-glycero-3-phospho-(1D-myo-inositol) + phosphate. It carries out the reaction 1,2-dioctanoyl-sn-glycero-3-phospho-(1D-myo-inositol-3,5-bisphosphate) + H2O = 1,2-dioctanoyl-sn-glycero-3-phospho-(1D-myo-inositol-5-phosphate) + phosphate. In terms of biological role, lipid phosphatase that specifically dephosphorylates the D-3 position of phosphatidylinositol 3-phosphate and phosphatidylinositol 3,5-bisphosphate, generating phosphatidylinositol and phosphatidylinositol 5-phosphate. In Danio rerio (Zebrafish), this protein is Phosphatidylinositol-3,5-bisphosphate 3-phosphatase MTMR8 (mtmr8).